The following is a 240-amino-acid chain: 1-(5-phosphoribosyl)-5-[(5-phosphoribosylamino)methylideneamino] imidazole-4-carboxamide isomerase (240 aa).

The Proton acceptor role is filled by Asp9. Asp131 (proton donor) is an active-site residue.

Belongs to the HisA/HisF family.

The protein localises to the cytoplasm. It carries out the reaction 1-(5-phospho-beta-D-ribosyl)-5-[(5-phospho-beta-D-ribosylamino)methylideneamino]imidazole-4-carboxamide = 5-[(5-phospho-1-deoxy-D-ribulos-1-ylimino)methylamino]-1-(5-phospho-beta-D-ribosyl)imidazole-4-carboxamide. It functions in the pathway amino-acid biosynthesis; L-histidine biosynthesis; L-histidine from 5-phospho-alpha-D-ribose 1-diphosphate: step 4/9. The polypeptide is 1-(5-phosphoribosyl)-5-[(5-phosphoribosylamino)methylideneamino] imidazole-4-carboxamide isomerase (Cytophaga hutchinsonii (strain ATCC 33406 / DSM 1761 / CIP 103989 / NBRC 15051 / NCIMB 9469 / D465)).